Consider the following 248-residue polypeptide: tRNA pseudouridine synthase A (248 aa).

Aspartate 53 functions as the Nucleophile in the catalytic mechanism. Tyrosine 111 contacts substrate.

Belongs to the tRNA pseudouridine synthase TruA family. As to quaternary structure, homodimer.

It carries out the reaction uridine(38/39/40) in tRNA = pseudouridine(38/39/40) in tRNA. Its function is as follows. Formation of pseudouridine at positions 38, 39 and 40 in the anticodon stem and loop of transfer RNAs. The sequence is that of tRNA pseudouridine synthase A from Listeria welshimeri serovar 6b (strain ATCC 35897 / DSM 20650 / CCUG 15529 / CIP 8149 / NCTC 11857 / SLCC 5334 / V8).